The sequence spans 483 residues: Coagulation factor X isoform 1 (483 aa).

A signal peptide spans 1 to 20 (MAPQLLLCLILTFLWSLPEA). The propeptide occupies 21 to 40 (ESNVFLKSKVANRFLQRTKR). The region spanning 41–86 (ANSLFEEFKSGNIERECIEERCSKEEAREAFEDDEKTETFWNVYVD) is the Gla domain. A 4-carboxyglutamate mark is found at E46, E47, E54, E56, E59, E60, E65, E66, E69, E72, and E75. An intrachain disulfide couples C57 to C62. In terms of domain architecture, EGF-like 1; calcium-binding spans 86–122 (DGDQCSSNPCHYGGTCKDGIGSYTCTCLSGYEGKNCE). Disulfide bonds link C90/C101, C95/C110, C112/C121, C129/C140, C136/C149, C151/C164, C172/C345, C245/C250, C265/C281, C393/C407, and C418/C446. S92 carries an O-linked (Hex...) serine glycan. D103 carries the (3R)-3-hydroxyaspartate modification. Residues 125 to 165 (LYKSCRVDNGDCWHFCKPVQNGIQCSCAESYLLGEDGHSCV) form the EGF-like 2 domain. The propeptide at 183–238 (EANLPDFQTDFSDDYDEIDENNFVETPTNFSGLVLTVQSQNATLLKKSDNPSPDIR) is activation peptide. One can recognise a Peptidase S1 domain in the interval 239–470 (VVNGTDCKLG…FILWIKRIIR (232 aa)). H280 serves as the catalytic Charge relay system. An N-linked (GlcNAc...) asparagine glycan is attached at N283. Catalysis depends on D325, which acts as the Charge relay system. Residue S422 is the Charge relay system of the active site.

The protein belongs to the peptidase S1 family. In terms of assembly, heterodimer of a light chain and a heavy chain; disulfide-linked. Gamma-carboxyglutamate residues are formed by vitamin K dependent carboxylation. These residues are essential for the binding of calcium. In terms of processing, the activation peptide is cleaved by factor IXa (in the intrinsic pathway), or by factor VIIa (in the extrinsic pathway). Post-translationally, the iron and 2-oxoglutarate dependent 3-hydroxylation of aspartate and asparagine is (R) stereospecific within EGF domains. As to expression, plasma; synthesized in the liver.

The protein resides in the secreted. The catalysed reaction is Selective cleavage of Arg-|-Thr and then Arg-|-Ile bonds in prothrombin to form thrombin.. Its function is as follows. Factor Xa is a vitamin K-dependent glycoprotein that converts prothrombin to thrombin in the presence of factor Va, calcium and phospholipid during blood clotting. This is Coagulation factor X isoform 1 (F10) from Pseudonaja textilis (Eastern brown snake).